Here is a 434-residue protein sequence, read N- to C-terminus: 3-phosphoshikimate 1-carboxyvinyltransferase (434 aa).

3-phosphoshikimate is bound by residues Lys22, Ser23, and Arg27. Phosphoenolpyruvate is bound at residue Lys22. Residues Gly93 and Arg121 each contribute to the phosphoenolpyruvate site. 3-phosphoshikimate-binding residues include Ser168, Ser169, Gln170, Ser199, Asp320, and Lys347. Position 170 (Gln170) interacts with phosphoenolpyruvate. Asp320 acts as the Proton acceptor in catalysis. Arg351, Arg394, and Lys419 together coordinate phosphoenolpyruvate.

It belongs to the EPSP synthase family. Monomer.

Its subcellular location is the cytoplasm. It catalyses the reaction 3-phosphoshikimate + phosphoenolpyruvate = 5-O-(1-carboxyvinyl)-3-phosphoshikimate + phosphate. The protein operates within metabolic intermediate biosynthesis; chorismate biosynthesis; chorismate from D-erythrose 4-phosphate and phosphoenolpyruvate: step 6/7. Catalyzes the transfer of the enolpyruvyl moiety of phosphoenolpyruvate (PEP) to the 5-hydroxyl of shikimate-3-phosphate (S3P) to produce enolpyruvyl shikimate-3-phosphate and inorganic phosphate. The polypeptide is 3-phosphoshikimate 1-carboxyvinyltransferase (Paraburkholderia phymatum (strain DSM 17167 / CIP 108236 / LMG 21445 / STM815) (Burkholderia phymatum)).